The chain runs to 821 residues: uncharacterized protein (821 aa).

Disordered regions lie at residues 1–20 (MGQT…TTSS), 55–96 (SENY…EAYS), 134–205 (SYDF…NNEH), 240–263 (RLHQ…RSSW), 274–293 (PEEF…TPLN), 360–381 (NVLQ…ESNS), 430–450 (TSED…NESR), 467–497 (EFST…SQAF), 512–535 (RNLF…NQPT), and 549–641 (AQEP…SNQT). Polar residues-rich tracts occupy residues 58–88 (YADT…CSTQ) and 185–203 (SLPS…SINN). Polar residues predominate over residues 279-293 (NASNPEAHSNFTPLN). The segment covering 437–450 (TMTQENQSLHNESR) has biased composition (polar residues). Low complexity-rich tracts occupy residues 517-529 (TSNS…SSFS) and 568-578 (SSLLDSSNSNS). A compositionally biased stretch (polar residues) spans 579–622 (QRPFSTVPSESNVFSRNASGNFSMSQTHQPTTDNTSSFSTQPGR). The RING-type; atypical zinc finger occupies 766 to 809 (CLICLETYTNGDICRKLQACKHFFHQACIDQWLTTGNNSCPLCR).

This is an uncharacterized protein from Schizosaccharomyces pombe (strain 972 / ATCC 24843) (Fission yeast).